Reading from the N-terminus, the 1366-residue chain is ABC multidrug transporter MDR2 (1366 aa).

A helical transmembrane segment spans residues 52 to 72 (IALIVIGTIAGIGAGIPFPLL). One can recognise an ABC transmembrane type-1 1 domain in the interval 56 to 354 (VIGTIAGIGA…MAPFMHIFAS (299 aa)). Residue Asn-84 is glycosylated (N-linked (GlcNAc...) asparagine). The next 5 membrane-spanning stretches (helical) occupy residues 106 to 126 (VLQV…HTGC), 180 to 200 (KVGL…VAFL), 202 to 222 (VATI…MAFG), 288 to 308 (IQFG…FWQG), and 323 to 343 (VSVG…FVLS). The ABC transporter 1 domain occupies 390–669 (IELQDVTFNY…DGVYAGMVRL (280 aa)). 425–432 (GTSGSGKS) is an ATP binding site. A glycan (N-linked (GlcNAc...) asparagine) is linked at Asn-620. Positions 727 to 746 (PEEADSLPTEPEAKKEKPKQ) are disordered. Transmembrane regions (helical) follow at residues 768–788 (LGLI…VIFG), 807–827 (GMLF…AVIV), 868–888 (LLVA…GTTI), and 898–918 (LFAG…VLLA). In terms of domain architecture, ABC transmembrane type-1 2 spans 768 to 1055 (LGLITSIMIG…MFALVPDISK (288 aa)). The N-linked (GlcNAc...) asparagine glycan is linked to Asn-976. 2 consecutive transmembrane segments (helical) span residues 995–1015 (FWLS…YWWG) and 1019–1039 (ILAG…LLFS). In terms of domain architecture, ABC transporter 2 spans 1122–1361 (VQFRNVHFRY…CESYRANVIH (240 aa)). 1157-1164 (GPSGSGKS) lines the ATP pocket.

Belongs to the ABC transporter superfamily. ABCB family. Multidrug resistance exporter (TC 3.A.1.201) subfamily.

The protein localises to the cell membrane. Pleiotropic ABC efflux transporter that may be involved in the modulation susceptibility to a wide range of unrelated cytotoxic compounds. Does not act as an efflux pump for azoles, including fluconazole, itraconazole, ketoconazole, miconazole and voriconazole, nor does it modulate susceptibility to cycloheximide. The protein is ABC multidrug transporter MDR2 of Trichophyton rubrum (strain ATCC MYA-4607 / CBS 118892) (Athlete's foot fungus).